The following is an 89-amino-acid chain: MSLNAETKAAIVAEYAQSEGDTGSPEVQVALLTASINHLQGHFANHKHDHHSRRGLLRMVSSRRKLLDYLKGKNLARYQDLIKRLGLRR.

The protein belongs to the universal ribosomal protein uS15 family. In terms of assembly, part of the 30S ribosomal subunit. Forms a bridge to the 50S subunit in the 70S ribosome, contacting the 23S rRNA.

Its function is as follows. One of the primary rRNA binding proteins, it binds directly to 16S rRNA where it helps nucleate assembly of the platform of the 30S subunit by binding and bridging several RNA helices of the 16S rRNA. Forms an intersubunit bridge (bridge B4) with the 23S rRNA of the 50S subunit in the ribosome. The chain is Small ribosomal subunit protein uS15 from Aliivibrio fischeri (strain ATCC 700601 / ES114) (Vibrio fischeri).